A 341-amino-acid chain; its full sequence is HTH-type transcriptional repressor PurR (341 aa).

Positions 2–56 constitute an HTH lacI-type domain; sequence ATIKDVAKRANVSTTTVSHVINKTRFVAEETRNAVWAAIKELHYSPSAVARSLKV. A DNA-binding region (H-T-H motif) is located at residues 4 to 23; the sequence is IKDVAKRANVSTTTVSHVIN. The DNA-binding element occupies 48–56; it reads SAVARSLKV. Hypoxanthine contacts are provided by Tyr73, Arg190, Thr192, Phe221, and Asp275.

As to quaternary structure, homodimer.

It participates in purine metabolism; purine nucleotide biosynthesis [regulation]. Is the main repressor of the genes involved in the de novo synthesis of purine nucleotides, regulating purB, purC, purEK, purF, purHD, purL, purMN and guaBA expression. PurR is allosterically activated to bind its cognate DNA by binding the purine corepressors, hypoxanthine or guanine, thereby effecting transcription repression. The protein is HTH-type transcriptional repressor PurR of Klebsiella pneumoniae subsp. pneumoniae (strain ATCC 700721 / MGH 78578).